The chain runs to 186 residues: Nucleoside diphosphate kinase, mitochondrial (186 aa).

Residues 1–32 (MGSLFGRVAALRALLCGPRFQCLLVRPSSGGP) constitute a mitochondrion transit peptide. The ATP site is built by lysine 44, phenylalanine 92, arginine 120, threonine 126, arginine 137, and asparagine 147. Histidine 150 functions as the Pros-phosphohistidine intermediate in the catalytic mechanism.

The protein belongs to the NDK family. In terms of assembly, homohexamer. Interacts with OPA1. Interacts with CAPN8. Mg(2+) is required as a cofactor. Expressed in the base region of the oxyntic and pyloric mucosae.

It is found in the mitochondrion intermembrane space. The protein localises to the mitochondrion matrix. The catalysed reaction is a 2'-deoxyribonucleoside 5'-diphosphate + ATP = a 2'-deoxyribonucleoside 5'-triphosphate + ADP. The enzyme catalyses a ribonucleoside 5'-diphosphate + ATP = a ribonucleoside 5'-triphosphate + ADP. Functionally, major role in the synthesis of nucleoside triphosphates other than ATP. The ATP gamma phosphate is transferred to the NDP beta phosphate via a ping-pong mechanism, using a phosphorylated active-site intermediate. Through the catalyzed exchange of gamma-phosphate between di- and triphosphonucleosides participates in regulation of intracellular nucleotide homeostasis. Binds to anionic phospholipids, predominantly to cardiolipin; the binding inhibits its phosphotransfer activity. Acts as a mitochondria-specific NDK; its association with cardiolipin-containing mitochondrial inner membrane is coupled to respiration suggesting that ADP locally regenerated in the mitochondrion innermembrane space by its activity is directly taken up via ANT ADP/ATP translocase into the matrix space to stimulate respiratory ATP regeneration. Proposed to increase GTP-loading on dynamin-related GTPase OPA1 in mitochondria. In vitro can induce liposome cross-linking suggesting that it can cross-link inner and outer membranes to form contact sites, and promotes intermembrane migration of anionic phosphoplipids. Promotes the redistribution of cardiolipin between the mitochondrial inner membrane and outer membrane which is implicated in pro-apoptotic signaling. The polypeptide is Nucleoside diphosphate kinase, mitochondrial (Nme4) (Mus musculus (Mouse)).